We begin with the raw amino-acid sequence, 634 residues long: 1-deoxy-D-xylulose-5-phosphate synthase (634 aa).

Thiamine diphosphate contacts are provided by residues His74 and 115 to 117 (AHS). Asp146 provides a ligand contact to Mg(2+). Residues 147-148 (GA), Asn176, Tyr283, and Glu365 each bind thiamine diphosphate. Position 176 (Asn176) interacts with Mg(2+).

Belongs to the transketolase family. DXPS subfamily. In terms of assembly, homodimer. Mg(2+) is required as a cofactor. The cofactor is thiamine diphosphate.

It catalyses the reaction D-glyceraldehyde 3-phosphate + pyruvate + H(+) = 1-deoxy-D-xylulose 5-phosphate + CO2. The protein operates within metabolic intermediate biosynthesis; 1-deoxy-D-xylulose 5-phosphate biosynthesis; 1-deoxy-D-xylulose 5-phosphate from D-glyceraldehyde 3-phosphate and pyruvate: step 1/1. Its function is as follows. Catalyzes the acyloin condensation reaction between C atoms 2 and 3 of pyruvate and glyceraldehyde 3-phosphate to yield 1-deoxy-D-xylulose-5-phosphate (DXP). This is 1-deoxy-D-xylulose-5-phosphate synthase from Burkholderia pseudomallei (strain 668).